Consider the following 621-residue polypeptide: CEP295 N-terminal-like protein (621 aa).

The disordered stretch occupies residues 142-253 (GGRARENEPD…RSKGADLERS (112 aa)). The span at 159-170 (RSARPPRAKEKH) shows a compositional bias: basic residues. Residues 171–185 (RAALSEERSCREELG) are compositionally biased toward basic and acidic residues. Over residues 203–213 (KPQTTKATGRM) the composition is skewed to polar residues. The span at 219–229 (PPEKRKGRPEP) shows a compositional bias: basic and acidic residues. A coiled-coil region spans residues 328-359 (QCTLREKNKWQKELELAFEELFNINRKLKKHL). Disordered regions lie at residues 385 to 421 (CGAG…ASKT), 491 to 529 (DQAD…PDMS), and 543 to 586 (REQR…DRHS). Residues 498-525 (STASRQRQKAEMEQRRQKQLESLEQMEH) are a coiled coil. Residues 505–529 (QKAEMEQRRQKQLESLEQMEHPDMS) are compositionally biased toward basic and acidic residues. Residues 568 to 578 (ELSTTSPSGTS) show a composition bias toward polar residues.

The protein localises to the cell projection. Its subcellular location is the cilium. In Homo sapiens (Human), this protein is CEP295 N-terminal-like protein.